We begin with the raw amino-acid sequence, 173 residues long: Ferric citrate uptake sigma factor FecI (173 aa).

The Polymerase core binding motif lies at 40–52 (DIAQDTFLRVMVS). The segment at residues 139–158 (YSEIAHKLGVSISSVKKYVA) is a DNA-binding region (H-T-H motif).

It belongs to the sigma-70 factor family. ECF subfamily. Interacts with FecR (via cytoplasmic N-terminus).

Sigma factors are initiation factors that promote the attachment of RNA polymerase to specific initiation sites and are then released. This sigma factor regulates transcriptional activation of the fecABCDE operon which mediates ferric citrate transport. The protein is Ferric citrate uptake sigma factor FecI (fecI) of Escherichia coli (strain K12).